The chain runs to 293 residues: Ribosomal RNA small subunit methyltransferase H (293 aa).

Residues 32–34 (GGH), aspartate 51, phenylalanine 78, aspartate 99, and glutamine 106 contribute to the S-adenosyl-L-methionine site. Positions 274-293 (DEIRENPASRSAKMRVARRL) are disordered.

It belongs to the methyltransferase superfamily. RsmH family.

It localises to the cytoplasm. It catalyses the reaction cytidine(1402) in 16S rRNA + S-adenosyl-L-methionine = N(4)-methylcytidine(1402) in 16S rRNA + S-adenosyl-L-homocysteine + H(+). In terms of biological role, specifically methylates the N4 position of cytidine in position 1402 (C1402) of 16S rRNA. This Sulfurihydrogenibium azorense (strain DSM 15241 / OCM 825 / Az-Fu1) protein is Ribosomal RNA small subunit methyltransferase H.